The chain runs to 436 residues: tRNA(Ile)-lysidine synthase (436 aa).

Residue 21–26 coordinates ATP; sequence SGGVDS.

Belongs to the tRNA(Ile)-lysidine synthase family.

The protein localises to the cytoplasm. The catalysed reaction is cytidine(34) in tRNA(Ile2) + L-lysine + ATP = lysidine(34) in tRNA(Ile2) + AMP + diphosphate + H(+). Its function is as follows. Ligates lysine onto the cytidine present at position 34 of the AUA codon-specific tRNA(Ile) that contains the anticodon CAU, in an ATP-dependent manner. Cytidine is converted to lysidine, thus changing the amino acid specificity of the tRNA from methionine to isoleucine. This Aster yellows witches'-broom phytoplasma (strain AYWB) protein is tRNA(Ile)-lysidine synthase.